The sequence spans 122 residues: Small ribosomal subunit protein uS13 (122 aa).

The segment at 97 to 122 is disordered; it reads PCRGQRTKTNARTRKGPARTVAGKKK.

This sequence belongs to the universal ribosomal protein uS13 family. As to quaternary structure, part of the 30S ribosomal subunit. Forms a loose heterodimer with protein S19. Forms two bridges to the 50S subunit in the 70S ribosome.

Functionally, located at the top of the head of the 30S subunit, it contacts several helices of the 16S rRNA. In the 70S ribosome it contacts the 23S rRNA (bridge B1a) and protein L5 of the 50S subunit (bridge B1b), connecting the 2 subunits; these bridges are implicated in subunit movement. Contacts the tRNAs in the A and P-sites. The chain is Small ribosomal subunit protein uS13 from Geobacter sp. (strain M21).